The primary structure comprises 248 residues: Ribosomal RNA small subunit methyltransferase J (248 aa).

S-adenosyl-L-methionine contacts are provided by residues Arg-101–Asp-102, Glu-117–Arg-118, Ser-153–Ser-154, and Asp-171.

It belongs to the methyltransferase superfamily. RsmJ family.

Its subcellular location is the cytoplasm. It carries out the reaction guanosine(1516) in 16S rRNA + S-adenosyl-L-methionine = N(2)-methylguanosine(1516) in 16S rRNA + S-adenosyl-L-homocysteine + H(+). In terms of biological role, specifically methylates the guanosine in position 1516 of 16S rRNA. This Proteus mirabilis (strain HI4320) protein is Ribosomal RNA small subunit methyltransferase J.